The sequence spans 72 residues: Small ribosomal subunit protein bS18 (72 aa).

It belongs to the bacterial ribosomal protein bS18 family. As to quaternary structure, part of the 30S ribosomal subunit. Forms a tight heterodimer with protein bS6.

Functionally, binds as a heterodimer with protein bS6 to the central domain of the 16S rRNA, where it helps stabilize the platform of the 30S subunit. This Aquifex aeolicus (strain VF5) protein is Small ribosomal subunit protein bS18.